Consider the following 194-residue polypeptide: Protein GrpE (194 aa).

The segment covering 1 to 12 (MNKQKNNRERTP) has biased composition (basic and acidic residues). The segment at 1–44 (MNKQKNNRERTPQPEQDTERDEQLTNSHENDIDSAPAAEENDKV) is disordered.

Belongs to the GrpE family. As to quaternary structure, homodimer.

It localises to the cytoplasm. Functionally, participates actively in the response to hyperosmotic and heat shock by preventing the aggregation of stress-denatured proteins, in association with DnaK and GrpE. It is the nucleotide exchange factor for DnaK and may function as a thermosensor. Unfolded proteins bind initially to DnaJ; upon interaction with the DnaJ-bound protein, DnaK hydrolyzes its bound ATP, resulting in the formation of a stable complex. GrpE releases ADP from DnaK; ATP binding to DnaK triggers the release of the substrate protein, thus completing the reaction cycle. Several rounds of ATP-dependent interactions between DnaJ, DnaK and GrpE are required for fully efficient folding. This is Protein GrpE from Porphyromonas gingivalis (strain ATCC BAA-308 / W83).